A 432-amino-acid chain; its full sequence is D-amino acid dehydrogenase (432 aa).

Residue 3–17 coordinates FAD; the sequence is VLVLGGGVIGVTSAY.

It belongs to the DadA oxidoreductase family. Requires FAD as cofactor.

The catalysed reaction is a D-alpha-amino acid + A + H2O = a 2-oxocarboxylate + AH2 + NH4(+). The protein operates within amino-acid degradation; D-alanine degradation; NH(3) and pyruvate from D-alanine: step 1/1. In terms of biological role, oxidative deamination of D-amino acids. This chain is D-amino acid dehydrogenase, found in Delftia acidovorans (strain DSM 14801 / SPH-1).